Here is a 219-residue protein sequence, read N- to C-terminus: uncharacterized protein (219 aa).

Residue Asp-58 is part of the active site.

The protein belongs to the pseudouridine synthase RluA family.

It catalyses the reaction a uridine in RNA = a pseudouridine in RNA. This is an uncharacterized protein from Zymomonas mobilis subsp. mobilis (strain ATCC 31821 / ZM4 / CP4).